The primary structure comprises 358 residues: Replication factor C subunit 5 (358 aa).

Belongs to the activator 1 small subunits family. Heteropentamer of subunits rfc1, rfc2, rfc3, rfc4 and rfc5 that forms a complex (RFC) with PCNA in the presence of ATP. Two other complexes exist where rfc1 can be replaced by either ctf18 or elg1 to form the ctf18-RFC or the elg1-RFC complexes respectively.

It localises to the nucleus. Functionally, the elongation of primed DNA templates by DNA polymerase delta and epsilon requires the action of the accessory proteins PCNA and activator 1. In Schizosaccharomyces pombe (strain 972 / ATCC 24843) (Fission yeast), this protein is Replication factor C subunit 5 (rfc5).